A 422-amino-acid polypeptide reads, in one-letter code: Mitochondrial distribution and morphology protein 12 (422 aa).

Residues 1-386 enclose the SMP-LTD domain; sequence MSFDINWNQL…WPSWICIDMN (386 aa). 2 disordered regions span residues 74–134 and 387–422; these read GATN…HDLG and DDGD…THEV. Composition is skewed to acidic residues over residues 109–130 and 387–401; these read FDDD…EYDD and DDGD…EDSN. Residues 405-422 show a composition bias toward basic and acidic residues; that stretch reads GDGKDNDGKHGDGPTHEV.

It belongs to the MDM12 family. As to quaternary structure, component of the ER-mitochondria encounter structure (ERMES) or MDM complex, composed of MMM1, MDM10, MDM12 and MDM34. An MMM1 homodimer associates with one molecule of MDM12 on each side in a pairwise head-to-tail manner, and the SMP-LTD domains of MMM1 and MDM12 generate a continuous hydrophobic tunnel for phospholipid trafficking.

Its subcellular location is the mitochondrion outer membrane. It localises to the endoplasmic reticulum membrane. Functionally, component of the ERMES/MDM complex, which serves as a molecular tether to connect the endoplasmic reticulum (ER) and mitochondria. Components of this complex are involved in the control of mitochondrial shape and protein biogenesis, and function in nonvesicular lipid trafficking between the ER and mitochondria. MDM12 is required for the interaction of the ER-resident membrane protein MMM1 and the outer mitochondrial membrane-resident beta-barrel protein MDM10. The MDM12-MMM1 subcomplex functions in the major beta-barrel assembly pathway that is responsible for biogenesis of all mitochondrial outer membrane beta-barrel proteins, and acts in a late step after the SAM complex. The MDM10-MDM12-MMM1 subcomplex further acts in the TOM40-specific pathway after the action of the MDM12-MMM1 complex. Essential for establishing and maintaining the structure of mitochondria and maintenance of mtDNA nucleoids. In Candida dubliniensis (strain CD36 / ATCC MYA-646 / CBS 7987 / NCPF 3949 / NRRL Y-17841) (Yeast), this protein is Mitochondrial distribution and morphology protein 12.